Here is a 437-residue protein sequence, read N- to C-terminus: Chaperone SurA (437 aa).

The N-terminal stretch at 1-22 (MKNWKFPLISTLLLLLTINVHA) is a signal peptide. PpiC domains lie at 173–274 (TVQY…KIDD) and 283–383 (VTEV…EVLE).

It is found in the periplasm. It carries out the reaction [protein]-peptidylproline (omega=180) = [protein]-peptidylproline (omega=0). Chaperone involved in the correct folding and assembly of outer membrane proteins. Recognizes specific patterns of aromatic residues and the orientation of their side chains, which are found more frequently in integral outer membrane proteins. May act in both early periplasmic and late outer membrane-associated steps of protein maturation. The sequence is that of Chaperone SurA from Aliivibrio fischeri (strain ATCC 700601 / ES114) (Vibrio fischeri).